The following is an 86-amino-acid chain: Putative defensin-like protein 244 (86 aa).

The first 22 residues, 1–22, serve as a signal peptide directing secretion; the sequence is MKGIAMLLVSCLLFSFLSTNLA. 4 disulfides stabilise this stretch: Cys28–Cys83, Cys38–Cys67, Cys48–Cys77, and Cys65–Cys79.

Belongs to the DEFL family.

Its subcellular location is the secreted. The protein is Putative defensin-like protein 244 (SCRL11) of Arabidopsis thaliana (Mouse-ear cress).